The chain runs to 534 residues: NAD(P)H-quinone oxidoreductase chain 4 (534 aa).

A run of 14 helical transmembrane segments spans residues 12-32 (FPWLSASILFPIGSAFVIPFF), 44-64 (FALSIALITFLITVGSYINGF), 96-116 (MPLILLTSFITALAVLAAWPV), 120-140 (PKLFFFLILVMDGGQIAVFAV), 144-164 (LLFFLTWELELIPVYLLLAIW), 176-196 (FIIYTAGSSIFILLAALAMGF), 220-240 (ILCYVGLLIAFGVKLPIVPLH), 251-271 (TAPVHMLLAGILLKMGGYALL), 285-305 (FAPLLIVLGVVNIIYAALTSF), 314-334 (IAYSSISHMGFVLIGIGSFSS), 340-360 (AMLQMVSHGLIGASLFFLVGA), 384-404 (FALWTACSLASLALPGMSGFV), 425-445 (VVMASLAAIGVILTPIYLLSM), and 472-492 (VYIIACLLLPIIGIGLYPRLV).

The protein belongs to the complex I subunit 4 family.

It is found in the cellular thylakoid membrane. The enzyme catalyses a plastoquinone + NADH + (n+1) H(+)(in) = a plastoquinol + NAD(+) + n H(+)(out). It carries out the reaction a plastoquinone + NADPH + (n+1) H(+)(in) = a plastoquinol + NADP(+) + n H(+)(out). In terms of biological role, NDH-1 shuttles electrons from NAD(P)H, via FMN and iron-sulfur (Fe-S) centers, to quinones in the respiratory chain. The immediate electron acceptor for the enzyme in this species is believed to be plastoquinone. Couples the redox reaction to proton translocation (for every two electrons transferred, four hydrogen ions are translocated across the cytoplasmic membrane), and thus conserves the redox energy in a proton gradient. The protein is NAD(P)H-quinone oxidoreductase chain 4 of Prochlorococcus marinus (strain AS9601).